A 338-amino-acid polypeptide reads, in one-letter code: Phosphate acyltransferase (338 aa).

The protein belongs to the PlsX family. As to quaternary structure, homodimer. Probably interacts with PlsY.

The protein localises to the cytoplasm. The catalysed reaction is a fatty acyl-[ACP] + phosphate = an acyl phosphate + holo-[ACP]. It functions in the pathway lipid metabolism; phospholipid metabolism. Functionally, catalyzes the reversible formation of acyl-phosphate (acyl-PO(4)) from acyl-[acyl-carrier-protein] (acyl-ACP). This enzyme utilizes acyl-ACP as fatty acyl donor, but not acyl-CoA. This is Phosphate acyltransferase from Salinibacter ruber (strain DSM 13855 / M31).